Here is a 141-residue protein sequence, read N- to C-terminus: Hemoglobin subunit zeta (141 aa).

An N-acetylserine modification is found at S1. In terms of domain architecture, Globin spans 1–141 (SLTKAERTII…VSGVLTEKYR (141 aa)). Position 28 is a phosphothreonine (T28). At S52 the chain carries Phosphoserine. H58 lines the heme b pocket. S72 is subject to Phosphoserine. H87 lines the heme b pocket.

Belongs to the globin family. Heterotetramer of two zeta chains and two epsilon chains.

The zeta chain is an alpha-type chain of mammalian embryonic hemoglobin. This Sus scrofa (Pig) protein is Hemoglobin subunit zeta.